The sequence spans 421 residues: ATP-dependent RNA helicase RhlB (421 aa).

The Q motif signature appears at 9-37 (QKFSDFALHPKVVEALEKKGFHNCTPIQA). Positions 40–219 (LPLTLAGRDV…FEQMNNAEYI (180 aa)) constitute a Helicase ATP-binding domain. 53 to 60 (AQTGTGKT) contacts ATP. The DEAD box signature appears at 165-168 (DEAD). The Helicase C-terminal domain occupies 245-390 (RLLQTLIEEE…VSKYNPDALM (146 aa)). Residues 392–421 (DLPKPLRLTRPRTGNGPRRTGTPRNRRRSG) are disordered. The span at 402-414 (PRTGNGPRRTGTP) shows a compositional bias: low complexity.

It belongs to the DEAD box helicase family. RhlB subfamily. In terms of assembly, component of the RNA degradosome, which is a multiprotein complex involved in RNA processing and mRNA degradation.

It localises to the cytoplasm. It catalyses the reaction ATP + H2O = ADP + phosphate + H(+). In terms of biological role, DEAD-box RNA helicase involved in RNA degradation. Has RNA-dependent ATPase activity and unwinds double-stranded RNA. The chain is ATP-dependent RNA helicase RhlB from Escherichia coli O17:K52:H18 (strain UMN026 / ExPEC).